The primary structure comprises 1014 residues: Ephrin type-B receptor 6 (1014 aa).

Positions 1 to 32 (MATEGTTGSGSRVVAGMVCSLWLLVLGSSVLA) are cleaved as a signal peptide. At 33–591 (LEEVLLDTTG…LPEKLSLVIG (559 aa)) the chain is on the extracellular side. The 199-residue stretch at 34-232 (EEVLLDTTGE…FSYTCPSVLR (199 aa)) folds into the Eph LBD domain. 2 Fibronectin type-III domains span residues 364–479 (PPSA…TSHE) and 480–575 (VPSA…TLPQ). N-linked (GlcNAc...) asparagine glycosylation occurs at asparagine 473. The chain crosses the membrane as a helical span at residues 592–612 (SILGALAFLLLAAITVLAVIF). The Cytoplasmic segment spans residues 613 to 1014 (QRKRRGTGYT…HLRQPGSVEV (402 aa)). Positions 663–912 (IKIEEVIGAG…QLVAAFDKMI (250 aa)) constitute a Protein kinase domain. Residue 669-677 (IGAGSFGEV) participates in ATP binding. In terms of domain architecture, SAM spans 941-1005 (PCLDSPQAWL…LHNIQLLQQH (65 aa)). Positions 1012–1014 (VEV) match the PDZ-binding motif.

It belongs to the protein kinase superfamily. Tyr protein kinase family. Ephrin receptor subfamily. In terms of assembly, interacts with CBL and EPHB1. Interacts with FYN; this interaction takes place in a ligand-independent manner. Post-translationally, ligand-binding increases phosphorylation on tyrosine residues. Phosphorylation on tyrosine residues is mediated by transphosphorylation by the catalytically active EPHB1 in a ligand-independent manner. Tyrosine phosphorylation of the receptor may act as a switch on the functional transition from cell adhesion/attraction to de-adhesion/repulsion. In terms of tissue distribution, high level in thymus, and brain. Very low levels of expression in kidney, lung, liver, bone marrow, skeletal muscle, spleen from 2 week old and adult mice, heart, testes and embryonic stem cells.

The protein resides in the cell membrane. It localises to the secreted. Kinase-defective receptor for members of the ephrin-B family. Binds to ephrin-B1 and ephrin-B2. Modulates cell adhesion and migration by exerting both positive and negative effects upon stimulation with ephrin-B2. Inhibits JNK activation, T-cell receptor-induced IL-2 secretion and CD25 expression upon stimulation with ephrin-B2. The polypeptide is Ephrin type-B receptor 6 (Ephb6) (Mus musculus (Mouse)).